Consider the following 521-residue polypeptide: Protein disulfide-isomerase A5 (521 aa).

The N-terminal stretch at 1-25 is a signal peptide; the sequence is MARVVPAWLLLPLAVWVVLPTWLSS. 3 consecutive Thioredoxin domains span residues 136 to 263, 274 to 386, and 387 to 508; these read FLKD…NPQP, ADEG…NPES, and PPPP…TLRE. Disulfide bonds link C184/C187, C307/C310, and C428/C431. The short motif at 518 to 521 is the Prevents secretion from ER element; that stretch reads KEEL.

Belongs to the protein disulfide isomerase family.

Its subcellular location is the endoplasmic reticulum lumen. It carries out the reaction Catalyzes the rearrangement of -S-S- bonds in proteins.. The protein is Protein disulfide-isomerase A5 (PDIA5) of Bos taurus (Bovine).